A 228-amino-acid polypeptide reads, in one-letter code: PKHD-type hydroxylase xcc-b100_1388 (228 aa).

Residues 78–180 enclose the Fe2OG dioxygenase domain; it reads RIYPPLFNRY…RVASFFWIQS (103 aa). Residues His96, Asp98, and His161 each contribute to the Fe cation site. 2-oxoglutarate is bound at residue Arg171.

Requires Fe(2+) as cofactor. L-ascorbate serves as cofactor.

This chain is PKHD-type hydroxylase xcc-b100_1388, found in Xanthomonas campestris pv. campestris (strain B100).